A 116-amino-acid chain; its full sequence is Flagellar transcriptional regulator FlhD (116 aa).

The protein belongs to the FlhD family. Homodimer; disulfide-linked. Forms a heterohexamer composed of two FlhC and four FlhD subunits. Each FlhC binds a FlhD dimer, forming a heterotrimer, and a hexamer assembles by dimerization of two heterotrimers.

The protein resides in the cytoplasm. Functions in complex with FlhC as a master transcriptional regulator that regulates transcription of several flagellar and non-flagellar operons by binding to their promoter region. Activates expression of class 2 flagellar genes, including fliA, which is a flagellum-specific sigma factor that turns on the class 3 genes. Also regulates genes whose products function in a variety of physiological pathways. This Pectobacterium carotovorum subsp. carotovorum (strain PC1) protein is Flagellar transcriptional regulator FlhD.